The chain runs to 376 residues: Putative F-box only protein 9 (376 aa).

One can recognise an F-box domain in the interval 1–44; sequence MSDLPPDLVEDILSRVPATSLKRLRFTCKQWNSLFKNRRFTEKH.

The protein is Putative F-box only protein 9 (FBX9) of Arabidopsis thaliana (Mouse-ear cress).